We begin with the raw amino-acid sequence, 83 residues long: MSVRIRLKRMGAKKRPYYRIVVMDSASPRDGRAIEELGYYHPVEMQNQVKINEDKFRDWIGKGAIPSDTVKRILNKNNFKVES.

The protein belongs to the bacterial ribosomal protein bS16 family.

The polypeptide is Small ribosomal subunit protein bS16 (Borrelia hermsii (strain HS1 / DAH)).